The sequence spans 85 residues: Large ribosomal subunit protein bL27 (85 aa).

A disordered region spans residues 1 to 20 (MAHKKAGGSTRNGRDSEAKR).

It belongs to the bacterial ribosomal protein bL27 family.

The sequence is that of Large ribosomal subunit protein bL27 from Proteus mirabilis (strain HI4320).